An 862-amino-acid polypeptide reads, in one-letter code: Autotaxin (862 aa).

The signal sequence occupies residues M1–G27. A propeptide spans F28 to R35 (removed by furin). N-linked (GlcNAc...) asparagine glycosylation occurs at N53. SMB domains lie at T54–A97 and R98–H142. Cystine bridges form between C58–C75, C62–C93, C73–C86, C79–C85, C102–C119, C107–C137, C117–C130, C123–C129, C148–C194, and C156–C350. The Cell attachment site motif lies at R126–D128. The phosphodiesterase domain stretch occupies residues V144–P501. Residues D171 and T209 each coordinate Zn(2+). The active-site Nucleophile is T209. The 1-(9Z-octadecenoyl)-sn-glycero-3-phosphate site is built by T209, N230, and D311. 1-hexadecanoyl-sn-glycero-3-phosphate contacts are provided by T209, N230, and D311. The 1-tetradecanoyl-sn-glycerol 3-phosphate site is built by T209, N230, and D311. Zn(2+)-binding residues include D311, H315, D358, and H359. Disulfide bonds link C366/C468, C413/C805, C566/C666, C568/C651, and C774/C784. A glycan (N-linked (GlcNAc...) asparagine) is linked at N410. Residue H474 participates in Zn(2+) binding. Residue H474 participates in 1-(9Z-octadecenoyl)-sn-glycero-3-phosphate binding. H474 contacts 1-hexadecanoyl-sn-glycero-3-phosphate. 1-tetradecanoyl-sn-glycerol 3-phosphate is bound at residue H474. An N-linked (GlcNAc...) asparagine glycan is attached at N524. Residues L597–I862 form a nuclease-like domain region. The Ca(2+) site is built by D739, N741, N743, L745, and D747. N806 carries N-linked (GlcNAc...) asparagine glycosylation. The interval I829–T850 is required for secretion.

It belongs to the nucleotide pyrophosphatase/phosphodiesterase family. It depends on Zn(2+) as a cofactor. Ca(2+) serves as cofactor. N-glycosylation, but not furin-cleavage, plays a critical role on secretion and on lysoPLD activity. Secretion requires simultaneous glycosylation on Asn-53 and Asn-410, while probable glycosylation of Asn-410 has a preferential role on lysoPLD activity. Not O-glycosylated. Post-translationally, the interdomain disulfide bond between Cys-413 and Cys-805 is essential for catalytic activity. In terms of tissue distribution, expressed in brain and adipose tissue.

It localises to the secreted. The enzyme catalyses a 1-O-alkyl-sn-glycero-3-phosphoethanolamine + H2O = a 1-O-alkyl-sn-glycero-3-phosphate + ethanolamine + H(+). The catalysed reaction is a 1-acyl-sn-glycero-3-phosphoethanolamine + H2O = a 1-acyl-sn-glycero-3-phosphate + ethanolamine + H(+). It carries out the reaction 1-(9Z-octadecenoyl)-sn-glycero-3-phosphoethanolamine + H2O = 1-(9Z-octadecenoyl)-sn-glycero-3-phosphate + ethanolamine + H(+). It catalyses the reaction a 1-O-alkyl-sn-glycero-3-phosphocholine + H2O = a 1-O-alkyl-sn-glycero-3-phosphate + choline + H(+). The enzyme catalyses 1-O-(9Z-octadecenyl)-sn-glycero-3-phosphocholine + H2O = 1-O-(9Z-octadecenyl)-sn-glycero-3-phosphate + choline + H(+). The catalysed reaction is 1-O-hexadecyl-sn-glycero-3-phosphocholine + H2O = 1-O-hexadecyl-sn-glycero-3-phosphate + choline + H(+). It carries out the reaction a 1-O-(1Z-alkenyl)-sn-glycero-3-phosphocholine + H2O = a 1-O-(1Z-alkenyl)-sn-glycero-3-phosphate + choline + H(+). It catalyses the reaction a 1-acyl-sn-glycero-3-phosphocholine + H2O = a 1-acyl-sn-glycero-3-phosphate + choline + H(+). The enzyme catalyses 1-dodecanoyl-sn-glycero-3-phosphocholine + H2O = 1-dodecanoyl-sn-glycerol 3-phosphate + choline + H(+). The catalysed reaction is 1-(9Z-octadecenoyl)-sn-glycero-3-phosphocholine + H2O = 1-(9Z-octadecenoyl)-sn-glycero-3-phosphate + choline + H(+). It carries out the reaction 1-tetradecanoyl-sn-glycero-3-phosphocholine + H2O = 1-tetradecanoyl-sn-glycerol 3-phosphate + choline + H(+). It catalyses the reaction 1-decanoyl-sn-glycero-3-phosphocholine + H2O = 1-decanoyl-sn-glycero-3-phosphate + choline + H(+). The enzyme catalyses 1-octadecanoyl-sn-glycero-3-phosphocholine + H2O = 1-octadecanoyl-sn-glycero-3-phosphate + choline + H(+). The catalysed reaction is 1-hexadecanoyl-sn-glycero-3-phosphocholine + H2O = 1-hexadecanoyl-sn-glycero-3-phosphate + choline + H(+). It carries out the reaction 1-hexanoyl-sn-glycero-3-phosphocholine + H2O = 1-hexanoyl-sn-glycero-3-phosphate + choline + H(+). It catalyses the reaction 1-(9Z,12Z)-octadecadienoyl-sn-glycero-3-phosphocholine + H2O = 1-(9Z,12Z)-octadecadienoyl-sn-glycero-3-phosphate + choline + H(+). The enzyme catalyses sphing-4-enine-phosphocholine + H2O = sphing-4-enine 1-phosphate + choline + H(+). The catalysed reaction is 1-(5Z,8Z,11Z,14Z-eicosatetraenoyl)-sn-glycero-3-phosphocholine + H2O = 1-(5Z,8Z,11Z,14Z-eicosatetraenoyl)-sn-glycero-3-phosphate + choline + H(+). It carries out the reaction a 2-acyl-sn-glycero-3-phosphocholine + H2O = a 2-acyl-sn-glycerol 3-phosphate + choline + H(+). It catalyses the reaction a 1,2-diacyl-sn-glycero-3-phosphocholine + H2O = a 1,2-diacyl-sn-glycero-3-phosphate + choline + H(+). The enzyme catalyses 1,2-dioctanoyl-sn-glycero-3-phosphocholine + H2O = 1,2-dioctanoyl-sn-glycero-3-phosphate + choline + H(+). The catalysed reaction is 1,2-didecanoyl-sn-glycero-3-phosphocholine + H2O = 1,2-didecanoyl-sn-glycero-3-phosphate + choline + H(+). It carries out the reaction a 1-acyl-sn-glycero-3-phospho-L-serine + H2O = a 1-acyl-sn-glycero-3-phosphate + L-serine + H(+). It catalyses the reaction 1-(9Z-octadecenoyl)-sn-glycero-3-phospho-L-serine + H2O = 1-(9Z-octadecenoyl)-sn-glycero-3-phosphate + L-serine + H(+). The enzyme catalyses a 2-acyl-sn-glycero-3-phospho-L-serine + H2O = a 2-acyl-sn-glycerol 3-phosphate + L-serine + H(+). Its activity is regulated as follows. Inhibited by EDTA and EGTA. In terms of biological role, secreted lysophospholipase D that hydrolyzes lysophospholipids to produce the signaling molecule lysophosphatidic acid (LPA) in extracellular fluids. Its major substrate is lysophosphatidylcholine. Can also act on sphingosylphosphorylcholine producing sphingosine-1-phosphate, a modulator of cell motility. Can hydrolyze, in vitro, bis-pNPP, to some extent pNP-TMP, and barely ATP. Involved in several motility-related processes such as angiogenesis and neurite outgrowth. Acts as an angiogenic factor by stimulating migration of smooth muscle cells and microtubule formation. Stimulates migration of melanoma cells, probably via a pertussis toxin-sensitive G protein. May have a role in induction of parturition. Possible involvement in cell proliferation and adipose tissue development. Required for LPA production in activated platelets, cleaves the sn-1 lysophospholipids to generate sn-1 lysophosphatidic acids containing predominantly 18:2 and 20:4 fatty acids. Shows a preference for the sn-1 to the sn-2 isomer of 1-O-alkyl-sn-glycero-3-phosphocholine (lyso-PAF). This is Autotaxin from Mus musculus (Mouse).